The following is a 123-amino-acid chain: Ferredoxin-5 (123 aa).

The region spanning 2-119 is the 2Fe-2S ferredoxin-type domain; the sequence is PNITFTSPIM…DVMVHFTGTP (118 aa). 4 residues coordinate [2Fe-2S] cluster: Cys-42, Cys-47, Cys-50, and Cys-102.

This sequence belongs to the 2Fe2S plant-type ferredoxin family. [2Fe-2S] cluster serves as cofactor.

Its function is as follows. Ferredoxins are iron-sulfur proteins that transfer electrons in a wide variety of metabolic reactions. This ferredoxin probably participates in nitrogen fixation. This Rhodobacter capsulatus (Rhodopseudomonas capsulata) protein is Ferredoxin-5 (fdxD).